Consider the following 183-residue polypeptide: MARLKEFYKKDVVTMMMKRFNYSSVMEVPRILKITLNMGVGEAVGDKKVMNHAIEDMTLISGQKPVVTKARKSIAGFKIREGWPIGCKVTLRRERMYEFLDRLISITLPRVRDFRGLNPKSFDGTGNYSMGIHEQIVFPEIDYDKTDGIRGLDICITTSAKTNEEAKALLEAFNLPLKDKDRK.

The protein belongs to the universal ribosomal protein uL5 family. As to quaternary structure, part of the 50S ribosomal subunit; part of the 5S rRNA/L5/L18/L25 subcomplex. Contacts the 5S rRNA and the P site tRNA. Forms a bridge to the 30S subunit in the 70S ribosome.

This is one of the proteins that bind and probably mediate the attachment of the 5S RNA into the large ribosomal subunit, where it forms part of the central protuberance. In the 70S ribosome it contacts protein S13 of the 30S subunit (bridge B1b), connecting the 2 subunits; this bridge is implicated in subunit movement. Contacts the P site tRNA; the 5S rRNA and some of its associated proteins might help stabilize positioning of ribosome-bound tRNAs. The protein is Large ribosomal subunit protein uL5 of Legionella pneumophila (strain Lens).